We begin with the raw amino-acid sequence, 161 residues long: Cyclic pyranopterin monophosphate synthase (161 aa).

Substrate-binding positions include 75–77 (MCH) and 115–116 (ME). D130 is an active-site residue.

This sequence belongs to the MoaC family. As to quaternary structure, homohexamer; trimer of dimers.

It carries out the reaction (8S)-3',8-cyclo-7,8-dihydroguanosine 5'-triphosphate = cyclic pyranopterin phosphate + diphosphate. It functions in the pathway cofactor biosynthesis; molybdopterin biosynthesis. In terms of biological role, catalyzes the conversion of (8S)-3',8-cyclo-7,8-dihydroguanosine 5'-triphosphate to cyclic pyranopterin monophosphate (cPMP). The sequence is that of Cyclic pyranopterin monophosphate synthase from Bacillus cereus (strain G9842).